Here is a 201-residue protein sequence, read N- to C-terminus: NAD(P)H dehydrogenase (quinone) (201 aa).

The 188-residue stretch at 4–191 folds into the Flavodoxin-like domain; it reads VLVLYYSMYG…KIAKCQGVHV (188 aa). FMN is bound by residues 10 to 15 and 79 to 81; these read SMYGHV and TRF. Tyr-12 is an NAD(+) binding site. Substrate is bound at residue Trp-99. FMN is bound by residues 114–120 and His-135; that span reads STGTQHG.

It belongs to the WrbA family. The cofactor is FMN.

It catalyses the reaction a quinone + NADH + H(+) = a quinol + NAD(+). It carries out the reaction a quinone + NADPH + H(+) = a quinol + NADP(+). This is NAD(P)H dehydrogenase (quinone) from Hydrogenovibrio crunogenus (strain DSM 25203 / XCL-2) (Thiomicrospira crunogena).